The sequence spans 194 residues: NADH-quinone oxidoreductase subunit B 1 (194 aa).

Residues Cys-47, Cys-48, Cys-113, and Cys-142 each coordinate [4Fe-4S] cluster.

Belongs to the complex I 20 kDa subunit family. In terms of assembly, NDH-1 is composed of 14 different subunits. Subunits NuoB, C, D, E, F, and G constitute the peripheral sector of the complex. [4Fe-4S] cluster is required as a cofactor.

The protein resides in the cell inner membrane. The enzyme catalyses a quinone + NADH + 5 H(+)(in) = a quinol + NAD(+) + 4 H(+)(out). In terms of biological role, NDH-1 shuttles electrons from NADH, via FMN and iron-sulfur (Fe-S) centers, to quinones in the respiratory chain. The immediate electron acceptor for the enzyme in this species is believed to be ubiquinone. Couples the redox reaction to proton translocation (for every two electrons transferred, four hydrogen ions are translocated across the cytoplasmic membrane), and thus conserves the redox energy in a proton gradient. This Sorangium cellulosum (strain So ce56) (Polyangium cellulosum (strain So ce56)) protein is NADH-quinone oxidoreductase subunit B 1.